A 79-amino-acid chain; its full sequence is Dolichol phosphate-mannose biosynthesis regulatory protein (79 aa).

Helical transmembrane passes span 8–28 (IGFV…TWVI) and 50–70 (IIIP…FLGL).

Belongs to the DPM2 family. As to quaternary structure, component of the dolichol-phosphate mannose (DPM) synthase complex composed of dpm1, dpm2 and dpm3.

It is found in the endoplasmic reticulum membrane. The protein operates within protein modification; protein glycosylation. Regulates the biosynthesis of dolichol phosphate-mannose. Regulatory subunit of the dolichol-phosphate mannose (DPM) synthase complex; essential for the ER localization and stable expression of dpm1. This chain is Dolichol phosphate-mannose biosynthesis regulatory protein (dpm2-1), found in Dictyostelium discoideum (Social amoeba).